The primary structure comprises 367 residues: tRNA uridine(34) hydroxylase (367 aa).

The Rhodanese domain occupies 159–253 (EDENSIVVDV…YAHEVSQKGL (95 aa)). The active-site Cysteine persulfide intermediate is Cys-213.

The protein belongs to the TrhO family.

It carries out the reaction uridine(34) in tRNA + AH2 + O2 = 5-hydroxyuridine(34) in tRNA + A + H2O. Functionally, catalyzes oxygen-dependent 5-hydroxyuridine (ho5U) modification at position 34 in tRNAs. In Leptospira interrogans serogroup Icterohaemorrhagiae serovar Lai (strain 56601), this protein is tRNA uridine(34) hydroxylase.